A 122-amino-acid polypeptide reads, in one-letter code: Large ribosomal subunit protein bL12 (122 aa).

Belongs to the bacterial ribosomal protein bL12 family. Homodimer. Part of the ribosomal stalk of the 50S ribosomal subunit. Forms a multimeric L10(L12)X complex, where L10 forms an elongated spine to which 2 to 4 L12 dimers bind in a sequential fashion. Binds GTP-bound translation factors.

Forms part of the ribosomal stalk which helps the ribosome interact with GTP-bound translation factors. Is thus essential for accurate translation. This is Large ribosomal subunit protein bL12 from Buchnera aphidicola subsp. Schizaphis graminum (strain Sg).